Here is a 747-residue protein sequence, read N- to C-terminus: DNA damage checkpoint protein LCD1 (747 aa).

Phosphoserine occurs at positions 10, 11, and 76. Positions 62 to 139 form a coiled coil; that stretch reads NQLVNQLNKA…MEARGKSKRE (78 aa). The disordered stretch occupies residues 145–180; that stretch reads KPPSTTLSTNTNTITPDSSSVAIEAKPQSPQSKKRK. Positions 146–160 are enriched in low complexity; it reads PPSTTLSTNTNTITP.

In terms of assembly, forms a complex with MEC1. Post-translationally, phosphorylated by MEC1 in a cell cycle dependent manner and in response to DNA damage.

The protein resides in the cytoplasm. Its subcellular location is the nucleus. Its function is as follows. Forms a complex with the serine/threonine kinase MEC1 which activates checkpoint signaling upon genotoxic stresses. The MEC1-LCD1 complex is recruited by the single-strand-binding protein complex RPA to DNA lesions in order to initiate the DNA repair by homologous recombination, after the MRX-complex and TEL1 are displaced. Required for the recruitment of MEC1 to DNA lesions, the activation of CHK1 and RAD53 kinases and phosphorylation of RAD9 in response to DNA damage. Required for cell growth and meiotic recombination. The sequence is that of DNA damage checkpoint protein LCD1 (LCD1) from Saccharomyces cerevisiae (strain ATCC 204508 / S288c) (Baker's yeast).